We begin with the raw amino-acid sequence, 677 residues long: MTQVAKKILVTCALPYANGSIHLGHMLEHIQADVWVRYQRMRGHEVNFICADDAHGTPIMLKAQQLGITPEQMIGEMSQEHQTDFAGFNISYDNYHSTHSDENRELSELIYTRLKENGFIKNRTISQLYDPEKGMFLPDRFVKGTCPKCKSADQYGDNCEVCGATYSPTELIEPKSVVSGATPVMRDSEHFFFDLPSFSEMLQAWTRSGALQEQVANKMQEWFESGLQQWDISRDAPYFGFEIPNAPGKYFYVWLDAPIGYMGSFKNLCDKRGDTTSFDEYWKKDSDAELYHFIGKDIVYFHSLFWPAMLEGSHFRKPTNLFVHGYVTVNGAKMSKSRGTFIKASTWLKHFDADSLRYYYTAKLSSRIDDIDLNLEDFVQRVNADIVNKVVNLASRNAGFINKRFDGVLAAELADPQLYKTFTDAAAVIGEAWESREFGKAIREIMALADVANRYVDEQAPWVVAKQEGRDADLQAICSMGINLFRVLMTYLKPVLPTLSERVEAFLNSELNWDAIEQPLLGHKVNTFKALYNRIDMKQVEALVEASKEEVKAAAAPVTGPLADFPIQETITFDDFAKIDLRVALIENAEFVEGSDKLLRLTLDLGGEKRNVFSGIRSAYPDPQALIGRQTVMVANLAPRKMRFGVSEGMVMAAGPGGKDIFLLSPDDGAKPGQQVK.

The short motif at 15-25 is the 'HIGH' region element; it reads PYANGSIHLGH. Positions 146, 149, 159, and 162 each coordinate Zn(2+). The short motif at 333 to 337 is the 'KMSKS' region element; the sequence is KMSKS. Lys336 is a binding site for ATP. In terms of domain architecture, tRNA-binding spans 575–677; that stretch reads DFAKIDLRVA…DGAKPGQQVK (103 aa).

Belongs to the class-I aminoacyl-tRNA synthetase family. MetG type 1 subfamily. Homodimer. The cofactor is Zn(2+).

The protein localises to the cytoplasm. It carries out the reaction tRNA(Met) + L-methionine + ATP = L-methionyl-tRNA(Met) + AMP + diphosphate. Functionally, is required not only for elongation of protein synthesis but also for the initiation of all mRNA translation through initiator tRNA(fMet) aminoacylation. In Salmonella paratyphi A (strain AKU_12601), this protein is Methionine--tRNA ligase.